Consider the following 335-residue polypeptide: Pyridoxal 5'-phosphate synthase subunit PdxS (335 aa).

D-ribose 5-phosphate is bound at residue D59. K116 acts as the Schiff-base intermediate with D-ribose 5-phosphate in catalysis. G188 is a binding site for D-ribose 5-phosphate. K200 provides a ligand contact to D-glyceraldehyde 3-phosphate. D-ribose 5-phosphate is bound by residues G253 and 274–275 (GS).

This sequence belongs to the PdxS/SNZ family. In the presence of PdxT, forms a dodecamer of heterodimers.

It catalyses the reaction aldehydo-D-ribose 5-phosphate + D-glyceraldehyde 3-phosphate + L-glutamine = pyridoxal 5'-phosphate + L-glutamate + phosphate + 3 H2O + H(+). The protein operates within cofactor biosynthesis; pyridoxal 5'-phosphate biosynthesis. In terms of biological role, catalyzes the formation of pyridoxal 5'-phosphate from ribose 5-phosphate (RBP), glyceraldehyde 3-phosphate (G3P) and ammonia. The ammonia is provided by the PdxT subunit. Can also use ribulose 5-phosphate and dihydroxyacetone phosphate as substrates, resulting from enzyme-catalyzed isomerization of RBP and G3P, respectively. The chain is Pyridoxal 5'-phosphate synthase subunit PdxS from Desulfurococcus amylolyticus (strain DSM 18924 / JCM 16383 / VKM B-2413 / 1221n) (Desulfurococcus kamchatkensis).